Here is a 365-residue protein sequence, read N- to C-terminus: Probable L-tyrosine/L-aspartate decarboxylase (365 aa).

Lys224 is modified (N6-(pyridoxal phosphate)lysine).

Belongs to the group II decarboxylase family. MfnA subfamily. It depends on pyridoxal 5'-phosphate as a cofactor.

The enzyme catalyses L-tyrosine + H(+) = tyramine + CO2. It catalyses the reaction L-aspartate + H(+) = beta-alanine + CO2. It functions in the pathway cofactor biosynthesis; methanofuran biosynthesis. The protein operates within cofactor biosynthesis; coenzyme A biosynthesis. Functionally, catalyzes the decarboxylation of L-tyrosine to produce tyramine for methanofuran biosynthesis. Can also catalyze the decarboxylation of L-aspartate to produce beta-alanine for coenzyme A (CoA) biosynthesis. The polypeptide is Probable L-tyrosine/L-aspartate decarboxylase (Methanoregula boonei (strain DSM 21154 / JCM 14090 / 6A8)).